The sequence spans 555 residues: Dynein regulatory complex protein 11 (555 aa).

IQ domains lie at E154–Q183 and H199–E226. Disordered regions lie at residues M232 to K255, K299 to I377, A450 to S469, and A501 to A555. Basic and acidic residues-rich tracts occupy residues K235–Q244 and G338–G367. Residues K452–K464 are compositionally biased toward basic residues. Residues A501 to G521 show a composition bias toward basic and acidic residues. The span at K537–S546 shows a compositional bias: basic residues.

The protein belongs to the AAA ATPase family. DRC11 subfamily. In terms of assembly, component of the nexin-dynein regulatory complex (N-DRC). Interacts with DRC5.

Its subcellular location is the cytoplasm. The protein resides in the cytoskeleton. It localises to the flagellum axoneme. Functionally, component of the nexin-dynein regulatory complex (N-DRC), a key regulator of ciliary/flagellar motility which maintains the alignment and integrity of the distal axoneme and regulates microtubule sliding in motile axonemes. The chain is Dynein regulatory complex protein 11 from Chlamydomonas reinhardtii (Chlamydomonas smithii).